Consider the following 512-residue polypeptide: Phosphotransferase UL97 homolog (512 aa).

Aspartate 274 serves as the catalytic Proton acceptor.

Belongs to the protein kinase superfamily. Tyr protein kinase family.

It catalyses the reaction L-tyrosyl-[protein] + ATP = O-phospho-L-tyrosyl-[protein] + ADP + H(+). The polypeptide is Phosphotransferase UL97 homolog (Elephantid herpesvirus 1 (isolate Asian elephant/Berlin/Kiba/1998) (EIHV-1)).